A 1116-amino-acid polypeptide reads, in one-letter code: Phosphatidylinositol 4-kinase beta 2 (1116 aa).

One can recognise a PIK helical domain in the interval 1-143 (MQMAQFLSLV…SRIQEKCQIA (143 aa)). Tandem repeats lie at residues 210 to 229 (ADDN…RDAL), 242 to 261 (CEKD…EDDE), 264 to 283 (SNSE…EEEE), 286 to 304 (NNSE…DEEE), 307 to 326 (SSSD…DEEE), 329 to 348 (ANSE…EDEE), 351 to 370 (ANTE…EDDK), and 378 to 396 (EEKD…DEKR). Residues 210-507 (ADDNKIFKRL…FRDRDRSVED (298 aa)) are 11 X 20 AA approximate repeats (PPC). Residues 394-404 (EKRNGNERNET) are compositionally biased toward basic and acidic residues. Residues 394-417 (EKRNGNERNETDETVYTDETSGED) are disordered. Residues 405–415 (DETVYTDETSG) show a composition bias toward acidic residues. Copy 9 of the repeat occupies 418 to 436 (NGREGFFKKLFKEKFEDKP). Serine 447 and serine 452 each carry phosphoserine. A run of 2 repeats spans residues 452 to 470 (SSEF…EDVK) and 488 to 507 (PGTE…SVED). 2 disordered regions span residues 515 to 540 (KYKE…LPNN) and 794 to 813 (GEAP…SDAQ). One can recognise a PI3K/PI4K catalytic domain in the interval 830–1101 (EFWEGKRLRI…LISSSLDAWR (272 aa)). A G-loop region spans residues 836-842 (RLRIRKD). Positions 964–972 (QIKDRHNGN) are catalytic loop. The interval 983-1007 (HIDFGFMLSNSPGGVNFESAPFKLT) is activation loop.

The protein belongs to the PI3/PI4-kinase family. Type III PI4K subfamily.

The protein resides in the cell membrane. The protein localises to the golgi apparatus. Its subcellular location is the trans-Golgi network. It localises to the cytoplasmic vesicle membrane. The enzyme catalyses a 1,2-diacyl-sn-glycero-3-phospho-(1D-myo-inositol) + ATP = a 1,2-diacyl-sn-glycero-3-phospho-(1D-myo-inositol 4-phosphate) + ADP + H(+). Functionally, acts on phosphatidylinositol (PtdIns) in the first committed step in the production of the second messenger inositol-1,4,5-trisphosphate. Necessary for proper organization of the trans-Golgi network (TGN) and post-Golgi secretion in root hairs. Together with PI4KB1, required during polarized root hair expansion and pollen tube elongation. Functions redundantly with PI4KB1 upstream of the cold response phosphoinositide-dependent phospholipase C (PI-PLC) pathway. This is Phosphatidylinositol 4-kinase beta 2 (PI4KB2) from Arabidopsis thaliana (Mouse-ear cress).